Consider the following 169-residue polypeptide: Prolyl-tRNA synthetase associated domain-containing protein 1 (169 aa).

This sequence belongs to the PRORSD1 family.

In Mus musculus (Mouse), this protein is Prolyl-tRNA synthetase associated domain-containing protein 1 (Prorsd1).